Reading from the N-terminus, the 367-residue chain is Germination protease (367 aa).

The propeptide occupies 1-15 (MKEPLDLSKYAVRTD).

Belongs to the peptidase A25 family. Homotetramer. In terms of processing, autoproteolytically processed. The inactive tetrameric zymogen termed p46 autoprocesses to a smaller form termed p41, which is active only during spore germination.

It catalyses the reaction Endopeptidase action with P4 Glu or Asp, P1 preferably Glu &gt; Asp, P1' hydrophobic and P2' Ala.. Initiates the rapid degradation of small, acid-soluble proteins during spore germination. This chain is Germination protease, found in Bacillus cytotoxicus (strain DSM 22905 / CIP 110041 / 391-98 / NVH 391-98).